Here is a 263-residue protein sequence, read N- to C-terminus: MVVRLQNGLMGKVYLVGAGPGDPGLITVKGKTLLENAEAVVYDALVSTAILAMVNPQAELIDAGKRRGRHTKLQSETTQLLAQLAEKHAVVVRLKGGDPFIFGRGGEEMEDLVKAGIEVEVVPGITAGIAAPAYAQIPLTHRAYSSSVTFVTGHESAGKYRPEVNWAAIAKGSETIVIYMGVYSLATILPQLMLAGLGEDTPIALIRWGTCPEQQKLVGTFATILAQIEVENFQAPAIVVIGAVVNYPANLRQQLAPILGGVN.

Residues proline 20, 96-98 (GGD), 126-127 (TA), methionine 180, and alanine 237 each bind S-adenosyl-L-homocysteine.

Belongs to the precorrin methyltransferase family.

The enzyme catalyses uroporphyrinogen III + 2 S-adenosyl-L-methionine = precorrin-2 + 2 S-adenosyl-L-homocysteine + H(+). Its pathway is cofactor biosynthesis; adenosylcobalamin biosynthesis; precorrin-2 from uroporphyrinogen III: step 1/1. It participates in porphyrin-containing compound metabolism; siroheme biosynthesis; precorrin-2 from uroporphyrinogen III: step 1/1. Functionally, catalyzes the two successive C-2 and C-7 methylation reactions involved in the conversion of uroporphyrinogen III to precorrin-2 via the intermediate formation of precorrin-1. It is a step in the biosynthesis of both cobalamin (vitamin B12) and siroheme. The protein is Uroporphyrinogen-III C-methyltransferase (cobA) of Synechocystis sp. (strain ATCC 27184 / PCC 6803 / Kazusa).